The chain runs to 271 residues: L-aspartate dehydrogenase (271 aa).

2 residues coordinate NAD(+): Ala124 and Asn192. The active site involves His222.

This sequence belongs to the L-aspartate dehydrogenase family.

It carries out the reaction L-aspartate + NADP(+) + H2O = oxaloacetate + NH4(+) + NADPH + H(+). The catalysed reaction is L-aspartate + NAD(+) + H2O = oxaloacetate + NH4(+) + NADH + H(+). It participates in cofactor biosynthesis; NAD(+) biosynthesis; iminoaspartate from L-aspartate (dehydrogenase route): step 1/1. Its function is as follows. Specifically catalyzes the NAD or NADP-dependent dehydrogenation of L-aspartate to iminoaspartate. In Methanococcoides burtonii (strain DSM 6242 / NBRC 107633 / OCM 468 / ACE-M), this protein is L-aspartate dehydrogenase.